The primary structure comprises 262 residues: Membrane protein US15 (262 aa).

A run of 7 helical transmembrane segments spans residues 46-66 (GAVG…CYAA), 77-97 (CLTE…VIFI), 108-128 (IGVL…ICLC), 133-153 (LVIS…GVAL), 163-183 (QIVV…VVIL), 186-206 (GWSW…CLAV), and 226-246 (LLAA…VLRI).

Belongs to the HHV-5 US12 protein family.

It is found in the host membrane. The polypeptide is Membrane protein US15 (US15) (Human cytomegalovirus (strain Merlin) (HHV-5)).